Here is a 557-residue protein sequence, read N- to C-terminus: Dihydroxy-acid dehydratase (557 aa).

Cys47 serves as a coordination point for [2Fe-2S] cluster. Position 79 (Asp79) interacts with Mg(2+). Cys120 lines the [2Fe-2S] cluster pocket. Positions 121 and 122 each coordinate Mg(2+). Position 122 is an N6-carboxylysine (Lys122). [2Fe-2S] cluster is bound at residue Cys192. Glu444 contacts Mg(2+). Ser470 acts as the Proton acceptor in catalysis.

This sequence belongs to the IlvD/Edd family. As to quaternary structure, homodimer. The cofactor is [2Fe-2S] cluster. Mg(2+) is required as a cofactor.

It carries out the reaction (2R)-2,3-dihydroxy-3-methylbutanoate = 3-methyl-2-oxobutanoate + H2O. It catalyses the reaction (2R,3R)-2,3-dihydroxy-3-methylpentanoate = (S)-3-methyl-2-oxopentanoate + H2O. The protein operates within amino-acid biosynthesis; L-isoleucine biosynthesis; L-isoleucine from 2-oxobutanoate: step 3/4. Its pathway is amino-acid biosynthesis; L-valine biosynthesis; L-valine from pyruvate: step 3/4. Its function is as follows. Functions in the biosynthesis of branched-chain amino acids. Catalyzes the dehydration of (2R,3R)-2,3-dihydroxy-3-methylpentanoate (2,3-dihydroxy-3-methylvalerate) into 2-oxo-3-methylpentanoate (2-oxo-3-methylvalerate) and of (2R)-2,3-dihydroxy-3-methylbutanoate (2,3-dihydroxyisovalerate) into 2-oxo-3-methylbutanoate (2-oxoisovalerate), the penultimate precursor to L-isoleucine and L-valine, respectively. The protein is Dihydroxy-acid dehydratase of Synechococcus sp. (strain CC9902).